We begin with the raw amino-acid sequence, 216 residues long: Large ribosomal subunit protein uL1 (216 aa).

The protein belongs to the universal ribosomal protein uL1 family. In terms of assembly, component of the large ribosomal subunit.

Its subcellular location is the cytoplasm. In terms of biological role, component of the large ribosomal subunit. The ribosome is a large ribonucleoprotein complex responsible for the synthesis of proteins in the cell. The sequence is that of Large ribosomal subunit protein uL1 (rpl10a) from Ictalurus punctatus (Channel catfish).